The primary structure comprises 380 residues: MAAPWWRVVLNGSRNWRGFSTSAALSRRAAPLGPMPNEDIDVSNLERLKKYRSFDRYRRRAEREARDPHWWRTYREHFGEESDPKDTVDIGLPPPKVCRTQQLLERKRVLRELRTSVEEERASRLRTASIPLEAVRAEWERTCGPYHKQRLAEYYGLYRDLFHGATFVPRVPLHVAYAIGEDDLVPVYYGNEVTPTEAAQPPEVTYEADEGSMWTLLLTNLDGHLLEPDAEYVHWLVTNIPGSRVAEGEETCPYLPPFPARGSGFHRFAFLLFKQDKPVDFSGDTRPSPCYQLAQRTFHTFDFYKKHQDAMTPAGLAFFQCRWDDSVTHIFHQLLDMREPVFEFVRPPPYHPKQKCFPHRQPLRYLDRYRDSHEPTYGFY.

A mitochondrion-targeting transit peptide spans 1 to 26; that stretch reads MAAPWWRVVLNGSRNWRGFSTSAALS. A coiled-coil region spans residues 101–122; the sequence is QQLLERKRVLRELRTSVEEERA.

Belongs to the phosphatidylethanolamine-binding protein family. Mitochondrion-specific ribosomal protein mL38 subfamily. Component of the mitochondrial ribosome large subunit (39S) which comprises a 16S rRNA and about 50 distinct proteins.

Its subcellular location is the mitochondrion. This is Large ribosomal subunit protein mL38 (MRPL38) from Bos taurus (Bovine).